Reading from the N-terminus, the 216-residue chain is Capsule polysaccharide export ATP-binding protein CtrD (216 aa).

The region spanning 2 to 215 is the ABC transporter domain; it reads ISVEHVSKRY…DKAYEYYNSL (214 aa). 38-45 lines the ATP pocket; the sequence is GRNGAGKS.

Belongs to the ABC transporter superfamily.

The protein resides in the cell inner membrane. It carries out the reaction ATP + H2O + capsular polysaccharide-[capsular polysaccharide-binding protein]Side 1 = ADP + phosphate + capsular polysaccharideSide 2 + [capsular polysaccharide-binding protein]Side 1.. Its function is as follows. Putative ATP-binding protein, and an energy-coupling component of capsule polysaccharide export apparatus. This chain is Capsule polysaccharide export ATP-binding protein CtrD (ctrD), found in Neisseria meningitidis serogroup B (strain ATCC BAA-335 / MC58).